A 317-amino-acid chain; its full sequence is ADP-L-glycero-D-manno-heptose-6-epimerase (317 aa).

NADP(+) contacts are provided by residues 10–11, 31–32, glutamine 38, lysine 53, 75–79, and asparagine 92; these read FI, DD, and QGACS. Catalysis depends on tyrosine 139, which acts as the Proton acceptor. Lysine 143 is a binding site for NADP(+). Position 166 (asparagine 166) interacts with substrate. Residues valine 167 and lysine 175 each coordinate NADP(+). Catalysis depends on lysine 175, which acts as the Proton acceptor. Residues glycine 177, histidine 184, 198–201, arginine 211, and tyrosine 275 contribute to the substrate site; that span reads FEGV.

This sequence belongs to the NAD(P)-dependent epimerase/dehydratase family. HldD subfamily. As to quaternary structure, homopentamer. It depends on NADP(+) as a cofactor.

The catalysed reaction is ADP-D-glycero-beta-D-manno-heptose = ADP-L-glycero-beta-D-manno-heptose. Its pathway is nucleotide-sugar biosynthesis; ADP-L-glycero-beta-D-manno-heptose biosynthesis; ADP-L-glycero-beta-D-manno-heptose from D-glycero-beta-D-manno-heptose 7-phosphate: step 4/4. Functionally, catalyzes the interconversion between ADP-D-glycero-beta-D-manno-heptose and ADP-L-glycero-beta-D-manno-heptose via an epimerization at carbon 6 of the heptose. This Shewanella frigidimarina (strain NCIMB 400) protein is ADP-L-glycero-D-manno-heptose-6-epimerase.